A 385-amino-acid chain; its full sequence is Methionine aminopeptidase 1 (385 aa).

The C6H2-type zinc-finger motif lies at 6–59; sequence TRVCETAGCSSEAKLQCPTCLKLGIQGSYFCSQECFKGSWATHKLLHKKAKDEK. Residues Cys-9, Cys-14, Cys-22, Cys-25, Cys-36, Cys-40, His-48, and His-52 each contribute to the Zn(2+) site. His-203 is an a protein binding site. Positions 220, 231, and 294 each coordinate Zn(2+). Residue His-301 coordinates a protein. The Zn(2+) site is built by Glu-327 and Glu-358.

The protein belongs to the peptidase M24A family. Methionine aminopeptidase type 1 subfamily. Associates with the 60S ribosomal subunit of the 80S translational complex. The cofactor is Zn(2+). Co(2+) serves as cofactor. Requires Mn(2+) as cofactor. It depends on Fe(2+) as a cofactor.

It localises to the cytoplasm. The enzyme catalyses Release of N-terminal amino acids, preferentially methionine, from peptides and arylamides.. Its function is as follows. Cotranslationally removes the N-terminal methionine from nascent proteins. The N-terminal methionine is often cleaved when the second residue in the primary sequence is small and uncharged (Met-Ala-, Cys, Gly, Pro, Ser, Thr, or Val). This is Methionine aminopeptidase 1 (METAP1) from Gallus gallus (Chicken).